The sequence spans 516 residues: Threonine synthase 2, chloroplastic (516 aa).

The transit peptide at 1 to 33 (MASFSLPHSATYFPSHSETSLKPHSAASFTVRC) directs the protein to the chloroplast. The segment covering 1–37 (MASFSLPHSATYFPSHSETSLKPHSAASFTVRCTSAS) has biased composition (polar residues). Residues 1 to 55 (MASFSLPHSATYFPSHSETSLKPHSAASFTVRCTSASPAVPPQTPQKPRRSPDEN) are disordered. Residues 133–135 (PYG), 156–158 (SAF), Asn163, Leu164, Lys172, and Asn178 each bind S-adenosyl-L-methionine. Residue Lys194 is modified to N6-(pyridoxal phosphate)lysine. Pyridoxal 5'-phosphate contacts are provided by residues 326–330 (GNLGN) and Thr464.

This sequence belongs to the threonine synthase family. As to quaternary structure, homodimer. Pyridoxal 5'-phosphate is required as a cofactor.

The protein localises to the plastid. Its subcellular location is the chloroplast. The catalysed reaction is O-phospho-L-homoserine + H2O = L-threonine + phosphate. It functions in the pathway amino-acid biosynthesis; L-threonine biosynthesis; L-threonine from L-aspartate: step 5/5. Its activity is regulated as follows. Allosterically activated by S-adenosyl-methionine (SAM). Catalyzes the gamma-elimination of phosphate from L-phosphohomoserine and the beta-addition of water to produce L-threonine. The protein is Threonine synthase 2, chloroplastic (TS2) of Arabidopsis thaliana (Mouse-ear cress).